A 35-amino-acid chain; its full sequence is Kappa-stichotoxin-She3a (35 aa).

The 33-residue stretch at 3–35 (CIDTIPKSRCTAFQCKHSMKYRLSFCRKTCGTC) folds into the ShKT domain. 3 disulfide bridges follow: cysteine 3-cysteine 35, cysteine 12-cysteine 28, and cysteine 17-cysteine 32.

This sequence belongs to the sea anemone type 1 potassium channel toxin family. Type 1a subfamily.

It localises to the secreted. Its subcellular location is the nematocyst. Its function is as follows. Peptide with both antimicrobial and neurotoxin activities. Inhibits voltage-dependent potassium channels. Potently blocks Kv1.1/KCNA1 (IC(50)=6.7-87 pM) and Kv1.3/KCNA3 (IC(50)=10-250 pM). Less potently blocks Kv1.4/KCNA4 (IC(50)=0.31 nM), and Kv1.6/KCNA6 (IC(50)=0.16 nM). Shows moderate activity on Kv1.2/KCNA2 (IC(50)=9 nM), Kv1.7/KCNA7 (IC(50)=11.5 nM), and KCa3.1/KCNN4 (Kd=0.03-30 nM). Blocks Kv channels by binding to a shallow vestibule at the outer entrance to the ion conduction pathway and occluding the entrance to the pore. Shows antibacterial activity against all tested bacteria (the Gram-positive bacteria B.subtilis and S.aureus, and the Gram-negative bacteria S.typhimurium and P.aeruginosa). In Stichodactyla helianthus (Sun anemone), this protein is Kappa-stichotoxin-She3a.